The sequence spans 229 residues: Small ribosomal subunit protein uS3c (229 aa).

In terms of domain architecture, KH type-2 spans 39–128; sequence LRDNLFKQYP…RIILTILKVQ (90 aa).

This sequence belongs to the universal ribosomal protein uS3 family. As to quaternary structure, part of the 30S ribosomal subunit.

Its subcellular location is the plastid. The protein resides in the chloroplast. This Tupiella akineta (Green alga) protein is Small ribosomal subunit protein uS3c (rps3).